We begin with the raw amino-acid sequence, 437 residues long: Probable glycine dehydrogenase (decarboxylating) subunit 1 (437 aa).

Belongs to the GcvP family. N-terminal subunit subfamily. The glycine cleavage system is composed of four proteins: P, T, L and H. In this organism, the P 'protein' is a heterodimer of two subunits.

It carries out the reaction N(6)-[(R)-lipoyl]-L-lysyl-[glycine-cleavage complex H protein] + glycine + H(+) = N(6)-[(R)-S(8)-aminomethyldihydrolipoyl]-L-lysyl-[glycine-cleavage complex H protein] + CO2. Functionally, the glycine cleavage system catalyzes the degradation of glycine. The P protein binds the alpha-amino group of glycine through its pyridoxal phosphate cofactor; CO(2) is released and the remaining methylamine moiety is then transferred to the lipoamide cofactor of the H protein. This chain is Probable glycine dehydrogenase (decarboxylating) subunit 1, found in Thermotoga petrophila (strain ATCC BAA-488 / DSM 13995 / JCM 10881 / RKU-1).